We begin with the raw amino-acid sequence, 172 residues long: Co-chaperone protein HscB (172 aa).

The region spanning 2–74 (DYFTLFGLPI…LKRAEYMLSL (73 aa)) is the J domain.

This sequence belongs to the HscB family. Interacts with HscA and stimulates its ATPase activity. Interacts with IscU.

Functionally, co-chaperone involved in the maturation of iron-sulfur cluster-containing proteins. Seems to help targeting proteins to be folded toward HscA. The protein is Co-chaperone protein HscB of Pectobacterium carotovorum subsp. carotovorum (strain PC1).